Here is an 82-residue protein sequence, read N- to C-terminus: MVTIRLSRGGAKKRPFYQIVVADSRSPRDGRFIERVGFFNPLATGKAERLRLDLDRVNAWVEKGASLSDRVSALVKEVQKAA.

The protein belongs to the bacterial ribosomal protein bS16 family.

The chain is Small ribosomal subunit protein bS16 from Actinobacillus succinogenes (strain ATCC 55618 / DSM 22257 / CCUG 43843 / 130Z).